The sequence spans 249 residues: Polyhedrin (249 aa).

This sequence belongs to the polyhedrin family.

Functionally, major component of the virus occlusion bodies, which are large proteinaceous structures (polyhedra), that protect the virus from the outside environment for extended periods until they are ingested by insect larvae. The protein is Polyhedrin (PH) of Lepidoptera (butterflies and moths).